The chain runs to 185 residues: Large ribosomal subunit protein bL17 (185 aa).

The protein belongs to the bacterial ribosomal protein bL17 family. Part of the 50S ribosomal subunit. Contacts protein L32.

This Rhodococcus erythropolis (strain PR4 / NBRC 100887) protein is Large ribosomal subunit protein bL17.